A 303-amino-acid chain; its full sequence is Putative deoxyribose-phosphate aldolase (303 aa).

Catalysis depends on D157, which acts as the Proton donor/acceptor. The Schiff-base intermediate with acetaldehyde role is filled by K220. The Proton donor/acceptor role is filled by K256.

Belongs to the DeoC/FbaB aldolase family. DeoC type 2 subfamily.

It catalyses the reaction 2-deoxy-D-ribose 5-phosphate = D-glyceraldehyde 3-phosphate + acetaldehyde. The protein operates within carbohydrate degradation; 2-deoxy-D-ribose 1-phosphate degradation; D-glyceraldehyde 3-phosphate and acetaldehyde from 2-deoxy-alpha-D-ribose 1-phosphate: step 2/2. Its function is as follows. Catalyzes a reversible aldol reaction between acetaldehyde and D-glyceraldehyde 3-phosphate to generate 2-deoxy-D-ribose 5-phosphate. This is Putative deoxyribose-phosphate aldolase from Caenorhabditis elegans.